The primary structure comprises 654 residues: MICOS complex subunit MIC60-2 (654 aa).

A mitochondrion-targeting transit peptide spans 1–12; that stretch reads MRGSRNLLTQRL. Over 13–20 the chain is Mitochondrial matrix; the sequence is ASSRATGS. A helical transmembrane segment spans residues 21–43; that stretch reads SGGLKFVGATVGAVTAGAAGVAG. The Mitochondrial intermembrane segment spans residues 44 to 654; the sequence is YASYDNEFRK…AALTSIRSTY (611 aa). The span at 115–129 shows a compositional bias: basic and acidic residues; that stretch reads LKETTEPKKIEKKPE. The disordered stretch occupies residues 115 to 140; it reads LKETTEPKKIEKKPENPYIGAKTPLN.

Belongs to the MICOS complex subunit Mic60 family. In terms of assembly, component of the mitochondrial contact site and cristae organizing system (MICOS) complex. As to expression, expressed in the gonads and muscle cells.

The protein localises to the mitochondrion inner membrane. It is found in the cytoplasm. Its function is as follows. Sustains mitochondrial morphology probably through maintaining cristae morphology. May act as a component of the MICOS complex, a large protein complex of the mitochondria. The protein is MICOS complex subunit MIC60-2 of Caenorhabditis elegans.